Consider the following 56-residue polypeptide: Large ribosomal subunit protein bL33 (56 aa).

This sequence belongs to the bacterial ribosomal protein bL33 family.

The chain is Large ribosomal subunit protein bL33 from Nocardioides sp. (strain ATCC BAA-499 / JS614).